Here is a 119-residue protein sequence, read N- to C-terminus: Large ribosomal subunit protein bL20 (119 aa).

It belongs to the bacterial ribosomal protein bL20 family.

Its function is as follows. Binds directly to 23S ribosomal RNA and is necessary for the in vitro assembly process of the 50S ribosomal subunit. It is not involved in the protein synthesizing functions of that subunit. This is Large ribosomal subunit protein bL20 from Paracoccus denitrificans (strain Pd 1222).